Reading from the N-terminus, the 711-residue chain is Interferon-induced GTP-binding protein Mx2 (711 aa).

The region spanning 115–387 (DLALPAIAVI…LILHINKSLP (273 aa)) is the Dynamin-type G domain. The G1 motif stretch occupies residues 125-132 (GDQSSGKS). 125 to 132 (GDQSSGKS) contributes to the GTP binding site. Residues 150–152 (VTR) are G2 motif. A G3 motif region spans residues 225 to 228 (DLPG). GTP contacts are provided by residues 225-229 (DLPGI) and 294-297 (TKPD). The interval 294-297 (TKPD) is G4 motif. The tract at residues 326–329 (RCRG) is G5 motif. One can recognise a GED domain in the interval 623–711 (NDEIGVHLNA…ARRALYMFFS (89 aa)).

This sequence belongs to the TRAFAC class dynamin-like GTPase superfamily. Dynamin/Fzo/YdjA family.

It is found in the cytoplasm. It localises to the nucleus. In terms of biological role, interferon-induced dynamin-like GTPase with antiviral activity against vesicular stomatitis virus (VSV). The protein is Interferon-induced GTP-binding protein Mx2 (MX2) of Canis lupus familiaris (Dog).